The chain runs to 79 residues: Delta-hormotoxin-Cpt1b (79 aa).

The signal sequence occupies residues 1 to 20; sequence MKTQVLALFVLCVLFCLAES. The propeptide occupies 21–31; the sequence is RTTLNKRNDIE. Disulfide bonds link C36/C75, C38/C66, and C56/C76.

This sequence belongs to the sea anemone sodium channel inhibitory toxin family.

The protein localises to the secreted. It is found in the nematocyst. Its function is as follows. In neuromuscular preparation of crustaceans, the toxin increased neurotransmitter release, causing repetitive firing of the axons. May affect sodium channels (Nav). This is Delta-hormotoxin-Cpt1b from Calliactis parasitica (Sea anemone).